The primary structure comprises 109 residues: Phosphoribosyl-ATP pyrophosphatase (109 aa).

The protein belongs to the PRA-PH family.

Its subcellular location is the cytoplasm. It carries out the reaction 1-(5-phospho-beta-D-ribosyl)-ATP + H2O = 1-(5-phospho-beta-D-ribosyl)-5'-AMP + diphosphate + H(+). Its pathway is amino-acid biosynthesis; L-histidine biosynthesis; L-histidine from 5-phospho-alpha-D-ribose 1-diphosphate: step 2/9. In Alkalilimnicola ehrlichii (strain ATCC BAA-1101 / DSM 17681 / MLHE-1), this protein is Phosphoribosyl-ATP pyrophosphatase.